Here is a 181-residue protein sequence, read N- to C-terminus: Ion-translocating oxidoreductase complex subunit B (181 aa).

The tract at residues 1 to 26 (MLEAVSAVMSLGGMALFAGLGLGYAA) is hydrophobic. In terms of domain architecture, 4Fe-4S spans 32–90 (EADPVVEKLEALLPATNCGMCGHPGCGPYAQAITEGEAINLCTPGGKAVMESIAAMLGV). 12 residues coordinate [4Fe-4S] cluster: cysteine 49, cysteine 52, cysteine 57, cysteine 73, cysteine 110, cysteine 113, cysteine 116, cysteine 120, cysteine 140, cysteine 143, cysteine 146, and cysteine 150. 4Fe-4S ferredoxin-type domains lie at 101–130 (KVAY…GANK) and 131–160 (QSHT…MQPV).

It belongs to the 4Fe4S bacterial-type ferredoxin family. RnfB subfamily. As to quaternary structure, the complex is composed of six subunits: RnfA, RnfB, RnfC, RnfD, RnfE and RnfG. It depends on [4Fe-4S] cluster as a cofactor.

The protein resides in the cell inner membrane. Its function is as follows. Part of a membrane-bound complex that couples electron transfer with translocation of ions across the membrane. This Magnetococcus marinus (strain ATCC BAA-1437 / JCM 17883 / MC-1) protein is Ion-translocating oxidoreductase complex subunit B.